Consider the following 442-residue polypeptide: GTPase Der (442 aa).

EngA-type G domains lie at 2–167 and 175–351; these read RTIA…PIQN and FKFC…EQAM. Residues 8–15, 55–59, 119–122, 181–188, 228–232, and 293–296 each bind GTP; these read GKPNVGKS, DTGGI, NKIE, GRPNVGKS, DTAGI, and NKWD. The KH-like domain occupies 352-436; that stretch reads RKIATSLLND…PITLYWQDKN (85 aa).

The protein belongs to the TRAFAC class TrmE-Era-EngA-EngB-Septin-like GTPase superfamily. EngA (Der) GTPase family. As to quaternary structure, associates with the 50S ribosomal subunit.

Functionally, GTPase that plays an essential role in the late steps of ribosome biogenesis. The protein is GTPase Der of Ureaplasma parvum serovar 3 (strain ATCC 27815 / 27 / NCTC 11736).